The chain runs to 126 residues: Aspartate 1-decarboxylase (126 aa).

Ser-25 functions as the Schiff-base intermediate with substrate; via pyruvic acid in the catalytic mechanism. At Ser-25 the chain carries Pyruvic acid (Ser). Residue Thr-57 coordinates substrate. Tyr-58 serves as the catalytic Proton donor. 73 to 75 (GAA) contacts substrate.

Belongs to the PanD family. Heterooctamer of four alpha and four beta subunits. Pyruvate is required as a cofactor. Post-translationally, is synthesized initially as an inactive proenzyme, which is activated by self-cleavage at a specific serine bond to produce a beta-subunit with a hydroxyl group at its C-terminus and an alpha-subunit with a pyruvoyl group at its N-terminus.

The protein localises to the cytoplasm. It carries out the reaction L-aspartate + H(+) = beta-alanine + CO2. It functions in the pathway cofactor biosynthesis; (R)-pantothenate biosynthesis; beta-alanine from L-aspartate: step 1/1. In terms of biological role, catalyzes the pyruvoyl-dependent decarboxylation of aspartate to produce beta-alanine. The sequence is that of Aspartate 1-decarboxylase from Thioalkalivibrio sulfidiphilus (strain HL-EbGR7).